Consider the following 32-residue polypeptide: 24 kDa flagellin (32 aa).

The protein belongs to the archaeal flagellin family. Post-translationally, glycosylated.

Its subcellular location is the archaeal flagellum. Flagellin is the subunit protein which polymerizes to form the filaments of archaeal flagella. The polypeptide is 24 kDa flagellin (Methanospirillum hungatei).